The following is a 407-amino-acid chain: Cysteine desulfurase (407 aa).

Residue Lys226 is modified to N6-(pyridoxal phosphate)lysine. Catalysis depends on Cys364, which acts as the Cysteine persulfide intermediate.

It belongs to the class-V pyridoxal-phosphate-dependent aminotransferase family. Csd subfamily. In terms of assembly, homodimer. Interacts with SufE and the SufBCD complex composed of SufB, SufC and SufD. The interaction with SufE is required to mediate the direct transfer of the sulfur atom from the S-sulfanylcysteine. It depends on pyridoxal 5'-phosphate as a cofactor.

It localises to the cytoplasm. It catalyses the reaction (sulfur carrier)-H + L-cysteine = (sulfur carrier)-SH + L-alanine. The enzyme catalyses L-selenocysteine + AH2 = hydrogenselenide + L-alanine + A + H(+). It functions in the pathway cofactor biosynthesis; iron-sulfur cluster biosynthesis. In terms of biological role, cysteine desulfurases mobilize the sulfur from L-cysteine to yield L-alanine, an essential step in sulfur metabolism for biosynthesis of a variety of sulfur-containing biomolecules. Component of the suf operon, which is activated and required under specific conditions such as oxidative stress and iron limitation. Acts as a potent selenocysteine lyase in vitro, that mobilizes selenium from L-selenocysteine. Selenocysteine lyase activity is however unsure in vivo. The polypeptide is Cysteine desulfurase (Pectobacterium carotovorum subsp. carotovorum (strain PC1)).